A 121-amino-acid chain; its full sequence is Large ribosomal subunit protein uL22c (121 aa).

It belongs to the universal ribosomal protein uL22 family. Part of the 50S ribosomal subunit.

The protein localises to the plastid. It localises to the chloroplast. In terms of biological role, this protein binds specifically to 23S rRNA. The globular domain of the protein is located near the polypeptide exit tunnel on the outside of the subunit, while an extended beta-hairpin is found that lines the wall of the exit tunnel in the center of the 70S ribosome. In Lemna minor (Common duckweed), this protein is Large ribosomal subunit protein uL22c (rpl22).